The chain runs to 252 residues: Phosphate import ATP-binding protein PstB 1 (252 aa).

An ABC transporter domain is found at 6-247 (ISSKDLHLYY…PKEKQTEDYI (242 aa)). Residue 38–45 (GPSGCGKS) participates in ATP binding.

Belongs to the ABC transporter superfamily. Phosphate importer (TC 3.A.1.7) family. The complex is composed of two ATP-binding proteins (PstB), two transmembrane proteins (PstC and PstA) and a solute-binding protein (PstS).

Its subcellular location is the cell membrane. It carries out the reaction phosphate(out) + ATP + H2O = ADP + 2 phosphate(in) + H(+). Functionally, part of the ABC transporter complex PstSACB involved in phosphate import. Responsible for energy coupling to the transport system. In Enterococcus faecalis (strain ATCC 700802 / V583), this protein is Phosphate import ATP-binding protein PstB 1.